Here is a 411-residue protein sequence, read N- to C-terminus: Serine/threonine-protein kinase 54 (411 aa).

Residues serine 43 and serine 45 each carry the phosphoserine; by PHOT1 modification. A Protein kinase domain is found at leucine 108–isoleucine 385. Residues isoleucine 114–valine 122 and lysine 135 contribute to the ATP site. Aspartate 253 acts as the Proton acceptor in catalysis. Threonine 286 carries the phosphothreonine modification.

This sequence belongs to the protein kinase superfamily. Ser/Thr protein kinase family. As to quaternary structure, binds to CBC2. Associates with PHOT2, BLUS1 and PM H(+)-ATPase (e.g. AHA1). Post-translationally, autophosphorylated. Phosphorylated in guard cells by HT1 in response to low CO(2) concentrations and by PHOT1 after blue light (BL) exposure. Expressed in guard cells.

It localises to the cytoplasm. Its subcellular location is the cytosol. It carries out the reaction L-seryl-[protein] + ATP = O-phospho-L-seryl-[protein] + ADP + H(+). The catalysed reaction is L-threonyl-[protein] + ATP = O-phospho-L-threonyl-[protein] + ADP + H(+). Serine/threonine protein kinase that phosphorylates proteins on serine and threonine residues. Collectively with CBC2, acts as a negative regulator of stomatal opening, probably via the inhibition of plasma membrane-type ATPases (AHA1 and AHA2) activity in guard cells, but in an abscisic acid (ABA)-independent manner. However, at low concentrations of CO(2), together with CBC2, stimulates stomatal opening via the inhibition of S-type anion channels in response to blue light (BL) and red light (RL), thus being a key component to maximize photosynthesis in the light under low CO(2) conditions. Required for temperature decrease in leaves. Downstream target of HIGH LEAF TEMPERATURE1 (HT1) during low CO(2)-induced stomatal opening. Also functions in the signaling pathways of phototropins. The chain is Serine/threonine-protein kinase 54 from Arabidopsis thaliana (Mouse-ear cress).